The sequence spans 83 residues: RNA-binding protein Hfq (83 aa).

In terms of domain architecture, Sm spans 11–71 (DTFLNHVRKN…ISTIMPGHPV (61 aa)).

Belongs to the Hfq family. As to quaternary structure, homohexamer.

In terms of biological role, RNA chaperone that binds small regulatory RNA (sRNAs) and mRNAs to facilitate mRNA translational regulation in response to envelope stress, environmental stress and changes in metabolite concentrations. Also binds with high specificity to tRNAs. The polypeptide is RNA-binding protein Hfq (Methylobacterium radiotolerans (strain ATCC 27329 / DSM 1819 / JCM 2831 / NBRC 15690 / NCIMB 10815 / 0-1)).